The following is a 484-amino-acid chain: Glutamate--tRNA ligase (484 aa).

The short motif at 12–22 (PSPTGEPHVGT) is the 'HIGH' region element. Positions 253–257 (KLSKR) match the 'KMSKS' region motif. Lys256 is a binding site for ATP.

Belongs to the class-I aminoacyl-tRNA synthetase family. Glutamate--tRNA ligase type 1 subfamily. Monomer.

The protein localises to the cytoplasm. It catalyses the reaction tRNA(Glu) + L-glutamate + ATP = L-glutamyl-tRNA(Glu) + AMP + diphosphate. Functionally, catalyzes the attachment of glutamate to tRNA(Glu) in a two-step reaction: glutamate is first activated by ATP to form Glu-AMP and then transferred to the acceptor end of tRNA(Glu). The protein is Glutamate--tRNA ligase of Rhizobium etli (strain CIAT 652).